Here is a 216-residue protein sequence, read N- to C-terminus: ATP phosphoribosyltransferase (216 aa).

It belongs to the ATP phosphoribosyltransferase family. Short subfamily. As to quaternary structure, heteromultimer composed of HisG and HisZ subunits.

It localises to the cytoplasm. It carries out the reaction 1-(5-phospho-beta-D-ribosyl)-ATP + diphosphate = 5-phospho-alpha-D-ribose 1-diphosphate + ATP. It participates in amino-acid biosynthesis; L-histidine biosynthesis; L-histidine from 5-phospho-alpha-D-ribose 1-diphosphate: step 1/9. Functionally, catalyzes the condensation of ATP and 5-phosphoribose 1-diphosphate to form N'-(5'-phosphoribosyl)-ATP (PR-ATP). Has a crucial role in the pathway because the rate of histidine biosynthesis seems to be controlled primarily by regulation of HisG enzymatic activity. The sequence is that of ATP phosphoribosyltransferase from Streptococcus thermophilus (strain ATCC BAA-491 / LMD-9).